Here is a 714-residue protein sequence, read N- to C-terminus: Fatty acid oxidation complex subunit alpha (714 aa).

The tract at residues 1 to 190 (MEMASAFTLN…KLGLVDDVVP (190 aa)) is enoyl-CoA hydratase. Residues 306–714 (APLNSVGILG…FWKTTATDLQ (409 aa)) are 3-hydroxyacyl-CoA dehydrogenase.

The protein in the N-terminal section; belongs to the enoyl-CoA hydratase/isomerase family. It in the central section; belongs to the 3-hydroxyacyl-CoA dehydrogenase family. Heterotetramer of two alpha chains (FadJ) and two beta chains (FadI).

The protein localises to the cytoplasm. The catalysed reaction is a (3S)-3-hydroxyacyl-CoA = a (2E)-enoyl-CoA + H2O. The enzyme catalyses a 4-saturated-(3S)-3-hydroxyacyl-CoA = a (3E)-enoyl-CoA + H2O. It carries out the reaction a (3S)-3-hydroxyacyl-CoA + NAD(+) = a 3-oxoacyl-CoA + NADH + H(+). It catalyses the reaction (3S)-3-hydroxybutanoyl-CoA = (3R)-3-hydroxybutanoyl-CoA. It functions in the pathway lipid metabolism; fatty acid beta-oxidation. In terms of biological role, catalyzes the formation of a hydroxyacyl-CoA by addition of water on enoyl-CoA. Also exhibits 3-hydroxyacyl-CoA epimerase and 3-hydroxyacyl-CoA dehydrogenase activities. The protein is Fatty acid oxidation complex subunit alpha of Escherichia coli O81 (strain ED1a).